The sequence spans 507 residues: Hexokinase-5 (507 aa).

The chain crosses the membrane as a helical span at residues 4–24; it reads AAAVGTAVVVAAAVGVAVVLA. The Hexokinase domain occupies 44 to 498; sequence RKVAAVIEDV…SGIGAALLAA (455 aa). The interval 99–237 is hexokinase small subdomain; that stretch reads TGNEQGLFYA…GLDMKIAALV (139 aa). 3 residues coordinate ADP: glycine 113, threonine 114, and asparagine 115. Residues threonine 203, lysine 204, asparagine 238, and aspartate 239 each coordinate D-glucose. Residues 238-487 are hexokinase large subdomain; it reads NDTVGTLAGG…SSVVTKLAND (250 aa). Threonine 262 lines the ADP pocket. The D-glucose site is built by asparagine 265, glutamate 293, and glutamate 324. An ADP-binding site is contributed by glycine 452.

It belongs to the hexokinase family. As to expression, expressed in roots, leaves, flowers, immature seeds, endosperm and seed coat.

It is found in the plastid. Its subcellular location is the chloroplast outer membrane. The enzyme catalyses a D-hexose + ATP = a D-hexose 6-phosphate + ADP + H(+). It carries out the reaction D-fructose + ATP = D-fructose 6-phosphate + ADP + H(+). It catalyses the reaction D-glucose + ATP = D-glucose 6-phosphate + ADP + H(+). The protein operates within carbohydrate metabolism; hexose metabolism. It functions in the pathway carbohydrate degradation; glycolysis; D-glyceraldehyde 3-phosphate and glycerone phosphate from D-glucose: step 1/4. Fructose and glucose phosphorylating enzyme. Functions as a glucose sensor for plant growth and photosynthesis. Is essential for pollen development, germination, and tube growth. Its activity is necessary for the starch utilization pathway during pollen germination and tube growth, as well as for starch biosynthesis during pollen maturation. This Oryza sativa subsp. japonica (Rice) protein is Hexokinase-5 (HXK5).